The chain runs to 141 residues: Large ribosomal subunit protein uL16 (141 aa).

Belongs to the universal ribosomal protein uL16 family. As to quaternary structure, part of the 50S ribosomal subunit.

Functionally, binds 23S rRNA and is also seen to make contacts with the A and possibly P site tRNAs. The sequence is that of Large ribosomal subunit protein uL16 from Thermus thermophilus (strain ATCC BAA-163 / DSM 7039 / HB27).